A 1579-amino-acid polypeptide reads, in one-letter code: DNA-directed RNA polymerase subunit beta' (1579 aa).

4 residues coordinate Zn(2+): Cys65, Cys67, Cys80, and Cys83. Mg(2+) contacts are provided by Asp601, Asp603, and Asp605. 4 residues coordinate Zn(2+): Cys938, Cys1012, Cys1019, and Cys1022.

This sequence belongs to the RNA polymerase beta' chain family. In terms of assembly, the RNAP catalytic core consists of 2 alpha, 1 beta, 1 beta' and 1 omega subunit. When a sigma factor is associated with the core the holoenzyme is formed, which can initiate transcription. It depends on Mg(2+) as a cofactor. The cofactor is Zn(2+).

It catalyses the reaction RNA(n) + a ribonucleoside 5'-triphosphate = RNA(n+1) + diphosphate. In terms of biological role, DNA-dependent RNA polymerase catalyzes the transcription of DNA into RNA using the four ribonucleoside triphosphates as substrates. The sequence is that of DNA-directed RNA polymerase subunit beta' from Sulfurihydrogenibium sp. (strain YO3AOP1).